The primary structure comprises 346 residues: Holliday junction branch migration complex subunit RuvB (346 aa).

The large ATPase domain (RuvB-L) stretch occupies residues 2-183 (TDDRIIGAGA…FGIVQRLEFY (182 aa)). Residues isoleucine 22, arginine 23, glycine 64, lysine 67, threonine 68, threonine 69, 130-132 (EDF), arginine 173, tyrosine 183, and arginine 220 each bind ATP. Residue threonine 68 participates in Mg(2+) binding. The small ATPAse domain (RuvB-S) stretch occupies residues 184 to 254 (SVEELTRIVR…VAQAAMKMLK (71 aa)). The segment at 257–346 (PEGFDELDRR…DLFAEVPDVG (90 aa)) is head domain (RuvB-H). Residues arginine 293, arginine 312, and arginine 317 each contribute to the DNA site.

This sequence belongs to the RuvB family. In terms of assembly, homohexamer. Forms an RuvA(8)-RuvB(12)-Holliday junction (HJ) complex. HJ DNA is sandwiched between 2 RuvA tetramers; dsDNA enters through RuvA and exits via RuvB. An RuvB hexamer assembles on each DNA strand where it exits the tetramer. Each RuvB hexamer is contacted by two RuvA subunits (via domain III) on 2 adjacent RuvB subunits; this complex drives branch migration. In the full resolvosome a probable DNA-RuvA(4)-RuvB(12)-RuvC(2) complex forms which resolves the HJ.

It is found in the cytoplasm. It catalyses the reaction ATP + H2O = ADP + phosphate + H(+). In terms of biological role, the RuvA-RuvB-RuvC complex processes Holliday junction (HJ) DNA during genetic recombination and DNA repair, while the RuvA-RuvB complex plays an important role in the rescue of blocked DNA replication forks via replication fork reversal (RFR). RuvA specifically binds to HJ cruciform DNA, conferring on it an open structure. The RuvB hexamer acts as an ATP-dependent pump, pulling dsDNA into and through the RuvAB complex. RuvB forms 2 homohexamers on either side of HJ DNA bound by 1 or 2 RuvA tetramers; 4 subunits per hexamer contact DNA at a time. Coordinated motions by a converter formed by DNA-disengaged RuvB subunits stimulates ATP hydrolysis and nucleotide exchange. Immobilization of the converter enables RuvB to convert the ATP-contained energy into a lever motion, pulling 2 nucleotides of DNA out of the RuvA tetramer per ATP hydrolyzed, thus driving DNA branch migration. The RuvB motors rotate together with the DNA substrate, which together with the progressing nucleotide cycle form the mechanistic basis for DNA recombination by continuous HJ branch migration. Branch migration allows RuvC to scan DNA until it finds its consensus sequence, where it cleaves and resolves cruciform DNA. The sequence is that of Holliday junction branch migration complex subunit RuvB from Stenotrophomonas maltophilia (strain K279a).